The following is a 368-amino-acid chain: uncharacterized protein (368 aa).

One can recognise a Response regulatory domain in the interval 3-120 (KILLADDERI…QIISSLEEII (118 aa)). At Asp55 the chain carries 4-aspartylphosphate. The 103-residue stretch at 259-361 (SKMIRLIADE…GLTPSEFRRK (103 aa)) folds into the HTH araC/xylS-type domain. DNA-binding regions (H-T-H motif) lie at residues 278 to 299 (WAAK…KQET) and 327 to 351 (VSEI…KKYT).

In terms of processing, phosphorylated by YesM.

The protein resides in the cytoplasm. In terms of biological role, member of the two-component regulatory system YesM/YesN. This is an uncharacterized protein from Bacillus subtilis (strain 168).